The following is a 1014-amino-acid chain: Protein argonaute 2 (1014 aa).

A compositionally biased stretch (basic and acidic residues) spans methionine 1 to glycine 15. Positions methionine 1–glutamate 137 are disordered. Composition is skewed to gly residues over residues glycine 18 to glutamate 29 and arginine 49 to arginine 58. Residues glutamine 83–glycine 104 show a composition bias toward low complexity. Gly residues predominate over residues serine 105–alanine 114. A compositionally biased stretch (low complexity) spans valine 121 to glutamate 137. The PAZ domain maps to serine 369 to glutamate 482. Positions leucine 666–glutamate 965 constitute a Piwi domain. Interaction with guide RNA regions lie at residues lysine 857–arginine 858, histidine 900–lysine 908, and phenylalanine 937–arginine 959.

This sequence belongs to the argonaute family. Ago subfamily. Interacts with NERD.

Its function is as follows. Involved in RNA-mediated post-transcriptional gene silencing (PTGS). Main component of the RNA-induced silencing complex (RISC) that binds to a short guide RNA such as microRNA (miRNA) or small interfering RNA (siRNA). RISC uses the mature miRNA or siRNA as a guide for slicer-directed cleavage of homologous mRNAs to repress gene expression. Associates mainly with siRNAs of 21 nucleotide in length and preferentially recruits small RNAs with a 5' terminal adenosine. Probably involved in antiviral RNA silencing. Associates with siRNA derived from cucumber mosaic virus (CMV). Targeted by turnip yellows virus (TuYV) protein P0 (via F-box-like domain) for probable proteasome degradation and thereby inactivating AGO2 function in RNA silencing. Required to direct NERD-dependent DNA methylation and silencing. This is Protein argonaute 2 (AGO2) from Arabidopsis thaliana (Mouse-ear cress).